The chain runs to 481 residues: MSLNLVSEQLLAANGLKHQDLFAILGQLAERRLDYGDLYFQSSYHESWVLEDRIIKDGSYNIDQGVGVRAISGEKTGFAYADQISLLALEQSAQAARTIVRDSGDGKVQTLGAVEHSPLYTSVDPLQSMSREEKLDILRRVDKVAREADKRVQEVTASLSGVYELILVAATDGTLAADVRPLVRLSVSVLVEEDGKRERGASGGGGRFGYEFFLADLDGEVRADAWAKEAVRMALVNLSAVAAPAGTMPVVLGAGWPGVLLHEAVGHGLEGDFNRRGTSVFSGQVGELVASELCTVVDDGTMVDRRGSVAIDDEGTPGQYNVLIENGILKGYMQDKLNARLMGMTPTGNGRRESYAHLPMPRMTNTYMLPGKSTPQEIIESVEYGIYAPNFGGGQVDITSGKFVFSTSEAYLIENGKVTKPVKGATLIGSGIETMQQISMVGNDLKLDNGVGVCGKEGQSLPVGVGQPTLKVDNLTVGGTA.

It belongs to the peptidase U62 family.

Its function is as follows. Metalloprotease involved in CcdA degradation. Suppresses the inhibitory activity of the carbon storage regulator (CsrA). The protein is Metalloprotease TldD (tldD) of Escherichia coli (strain K12).